The primary structure comprises 451 residues: 3-phosphoshikimate 1-carboxyvinyltransferase (451 aa).

3-phosphoshikimate contacts are provided by Lys28, Ser29, and Arg33. Lys28 is a phosphoenolpyruvate binding site. Positions 105 and 133 each coordinate phosphoenolpyruvate. 4 residues coordinate 3-phosphoshikimate: Ser178, Gln180, Asp331, and Lys358. Gln180 lines the phosphoenolpyruvate pocket. Asp331 serves as the catalytic Proton acceptor. 2 residues coordinate phosphoenolpyruvate: Arg362 and Arg406.

The protein belongs to the EPSP synthase family. In terms of assembly, monomer.

Its subcellular location is the cytoplasm. It carries out the reaction 3-phosphoshikimate + phosphoenolpyruvate = 5-O-(1-carboxyvinyl)-3-phosphoshikimate + phosphate. Its pathway is metabolic intermediate biosynthesis; chorismate biosynthesis; chorismate from D-erythrose 4-phosphate and phosphoenolpyruvate: step 6/7. Catalyzes the transfer of the enolpyruvyl moiety of phosphoenolpyruvate (PEP) to the 5-hydroxyl of shikimate-3-phosphate (S3P) to produce enolpyruvyl shikimate-3-phosphate and inorganic phosphate. This chain is 3-phosphoshikimate 1-carboxyvinyltransferase, found in Rhodospirillum rubrum (strain ATCC 11170 / ATH 1.1.1 / DSM 467 / LMG 4362 / NCIMB 8255 / S1).